The sequence spans 701 residues: MMKRQLHRMRQLAQTGSLGRTPETAEFLGEDLLQVEQRLEPAKRAAHNIHKRLQACLQGQSGADMDKRVKKLPLMALSTTMAESFKELDPDSSMGKALEMSCAIQNQLARILAEFEMTLERDVLQPLSRLSEEELPAILKHKKSLQKLVSDWNTLKSRLSQATKNSGSSQGLGGSPGSHSHTTMANKVETLKEEEEELKRKVEQCRDEYLADLYHFVTKEDSYANYFIRLLEIQADYHRRSLSSLDTALAELRENHGQADHSPSMTATHFPRVYGVSLATHLQELGREIALPIEACVMMLLSEGMKEEGLFRLAAGASVLKRLKQTMASDPHSLEEFCSDPHAVAGALKSYLRELPEPLMTFDLYDDWMRAASLKEPGARLQALQEVCSRLPPENLSNLRYLMKFLARLAEEQEVNKMTPSNIAIVLGPNLLWPPEKEGDQAQLDAASVSSIQVVGVVEALIQSADTLFPGDINFNVSGLFSAVTLQDTVSDRLASEELPSTAVPTPATTPAPAPAPAPAPAPALASAATKERTESEVPPRPASPKVTRSPPETAAPVEDMARRTKRPAPARPTMPPPQVSGSRSSPPAPPLPPGSGSPGTPQALPRRLVGSSLRAPTVPPPLPPTPPQPARRQSRRSPASPSPASPGPASPSPVSLSNPAQVDLGAATAEGGAPEAISGVPTPPAIPPQPRPRSLASETN.

The segment covering 1 to 10 (MMKRQLHRMR) has biased composition (basic residues). Disordered regions lie at residues 1 to 23 (MMKRQLHRMRQLAQTGSLGRTPE) and 160 to 182 (SQATKNSGSSQGLGGSPGSHSHT). An interaction with CGNL1 region spans residues 1 to 275 (MMKRQLHRMR…TATHFPRVYG (275 aa)). The 246-residue stretch at 17-262 (SLGRTPETAE…RENHGQADHS (246 aa)) folds into the BAR domain. Phosphoserine is present on residues Ser-175, Ser-241, Ser-262, and Ser-264. The region spanning 276–469 (VSLATHLQEL…ALIQSADTLF (194 aa)) is the Rho-GAP domain. The interaction with CD2AP stretch occupies residues 470 to 701 (PGDINFNVSG…RPRSLASETN (232 aa)). The segment at 496–701 (SEELPSTAVP…RPRSLASETN (206 aa)) is disordered. Residues 508 to 522 (ATTPAPAPAPAPAPA) show a composition bias toward pro residues. Ser-544 and Ser-550 each carry phosphoserine. Composition is skewed to pro residues over residues 570 to 579 (PARPTMPPPQ) and 587 to 596 (PPAPPLPPGS). Thr-601 is subject to Phosphothreonine. An SH3-binding motif is present at residues 616 to 625 (APTVPPPLPP). Composition is skewed to pro residues over residues 618 to 630 (TVPPPLPPTPPQP) and 641 to 652 (SPSPASPGPASP). Position 626 is a phosphothreonine (Thr-626). Ser-653 is modified (phosphoserine). The span at 666-677 (GAATAEGGAPEA) shows a compositional bias: low complexity. Pro residues predominate over residues 682 to 692 (PTPPAIPPQPR).

In terms of assembly, interacts with RAC1. Interacts with the exocyst via EXOC4 and EXOC8; required for the localization of both SH3BP1 and the exocyst to the leading edge of migrating cells. Interacts with CD2AP and CGNL1; probably part of a complex at cell junctions. Interacts with CAPZA1; recruits CAPZA1 to forming cell junctions. May interact with AFDN. Interacts with PLXND1; they dissociate upon SEMA3E binding to PLXND1 allowing SH3BP1 to transduce downstream signal through RAC1 inactivation. Interacts with ABL1, GRB2 and SRC (via SH3 domain).

The protein localises to the cell projection. It localises to the cell junction. The protein resides in the tight junction. Its subcellular location is the adherens junction. It is found in the phagocytic cup. The protein localises to the nucleus. It localises to the cytoplasm. The protein resides in the cytosol. Its function is as follows. GTPase activating protein (GAP) which specifically converts GTP-bound Rho-type GTPases including RAC1 and CDC42 in their inactive GDP-bound form. By specifically inactivating RAC1 at the leading edge of migrating cells, it regulates the spatiotemporal organization of cell protrusions which is important for proper cell migration. Also negatively regulates CDC42 in the process of actin remodeling and the formation of epithelial cell junctions. Through its GAP activity toward RAC1 and/or CDC42 plays a specific role in phagocytosis of large particles. Specifically recruited by a PI3 kinase/PI3K-dependent mechanism to sites of large particles engagement, inactivates RAC1 and/or CDC42 allowing the reorganization of the underlying actin cytoskeleton required for engulfment. It also plays a role in angiogenesis and the process of repulsive guidance as part of a semaphorin-plexin signaling pathway. Following the binding of PLXND1 to extracellular SEMA3E it dissociates from PLXND1 and inactivates RAC1, inducing the intracellular reorganization of the actin cytoskeleton and the collapse of cells. This is SH3 domain-binding protein 1 from Homo sapiens (Human).